A 520-amino-acid polypeptide reads, in one-letter code: Amine oxidase [flavin-containing] B (520 aa).

Ser-2 is subject to N-acetylserine. The Cytoplasmic portion of the chain corresponds to 2–489 (SNKSDVIVVG…TFLERHLPSV (488 aa)). 2 positions are modified to N6-acetyllysine: Lys-52 and Lys-248. At Cys-397 the chain carries S-8alpha-FAD cysteine. Residues 490 to 516 (PGLLKLFGLTTILSATALGFLAHKRGL) form a helical; Anchor for type IV membrane protein membrane-spanning segment. The Mitochondrial intermembrane segment spans residues 517 to 520 (FVHF).

Belongs to the flavin monoamine oxidase family. As to quaternary structure, monomer, homo- or heterodimer (containing two subunits of similar size). Each subunit contains a covalently bound flavin. Enzymatically active as monomer. FAD serves as cofactor.

It is found in the mitochondrion outer membrane. It catalyses the reaction a secondary aliphatic amine + O2 + H2O = a primary amine + an aldehyde + H2O2. It carries out the reaction (R)-adrenaline + O2 + H2O = (R)-3,4-dihydroxymandelaldehyde + methylamine + H2O2. The enzyme catalyses a primary methyl amine + O2 + H2O = an aldehyde + H2O2 + NH4(+). The catalysed reaction is benzylamine + O2 + H2O = benzaldehyde + H2O2 + NH4(+). It catalyses the reaction dopamine + O2 + H2O = 3,4-dihydroxyphenylacetaldehyde + H2O2 + NH4(+). It carries out the reaction tyramine + O2 + H2O = (4-hydroxyphenyl)acetaldehyde + H2O2 + NH4(+). The enzyme catalyses (R)-noradrenaline + O2 + H2O = (R)-3,4-dihydroxymandelaldehyde + H2O2 + NH4(+). The catalysed reaction is 2-phenylethylamine + O2 + H2O = 2-phenylacetaldehyde + H2O2 + NH4(+). It catalyses the reaction N-acetylputrescine + O2 + H2O = 4-acetamidobutanal + H2O2 + NH4(+). Its function is as follows. Catalyzes the oxidative deamination of primary and some secondary amines such as neurotransmitters, and exogenous amines including the tertiary amine, neurotoxin 1-methyl-4-phenyl-1,2,3,6-tetrahydropyridine (MPTP), with concomitant reduction of oxygen to hydrogen peroxide and participates in the metabolism of neuroactive and vasoactive amines in the central nervous system and peripheral tissues. Preferentially degrades benzylamine and phenylethylamine. This is Amine oxidase [flavin-containing] B from Mus musculus (Mouse).